Reading from the N-terminus, the 87-residue chain is Beta-defensin 109C (87 aa).

Positions 1 to 22 are cleaved as a signal peptide; that stretch reads MRLHLLLLILLLFSILLSPVRG. 3 cysteine pairs are disulfide-bonded: C31–C59, C38–C53, and C43–C60.

This sequence belongs to the beta-defensin family.

The protein resides in the secreted. Functionally, has antibacterial activity. The chain is Beta-defensin 109C (DEFB109C) from Homo sapiens (Human).